A 92-amino-acid chain; its full sequence is Conotoxin Cal22f (92 aa).

The signal sequence occupies residues 1–24; it reads MMSTKGITLFLCLLLLALATSVNG. The propeptide occupies 25–44; that stretch reads GQGTRRSRMTRALHGGRPSA.

Post-translationally, contains 4 disulfide bonds. Expressed by the venom duct.

It is found in the secreted. Probable neurotoxin with unknown target. Possibly targets ion channels. This Californiconus californicus (California cone) protein is Conotoxin Cal22f.